Reading from the N-terminus, the 223-residue chain is Deoxyribose-phosphate aldolase (223 aa).

Aspartate 89 serves as the catalytic Proton donor/acceptor. Lysine 152 (schiff-base intermediate with acetaldehyde) is an active-site residue. Lysine 181 functions as the Proton donor/acceptor in the catalytic mechanism.

The protein belongs to the DeoC/FbaB aldolase family. DeoC type 1 subfamily.

It is found in the cytoplasm. The enzyme catalyses 2-deoxy-D-ribose 5-phosphate = D-glyceraldehyde 3-phosphate + acetaldehyde. It participates in carbohydrate degradation; 2-deoxy-D-ribose 1-phosphate degradation; D-glyceraldehyde 3-phosphate and acetaldehyde from 2-deoxy-alpha-D-ribose 1-phosphate: step 2/2. Functionally, catalyzes a reversible aldol reaction between acetaldehyde and D-glyceraldehyde 3-phosphate to generate 2-deoxy-D-ribose 5-phosphate. The chain is Deoxyribose-phosphate aldolase from Listeria monocytogenes serotype 4b (strain CLIP80459).